The sequence spans 321 residues: Protein ZAR1-like (321 aa).

Residues 110–214 form a disordered region; that stretch reads RTLSSCSPWD…GDAASEPLRR (105 aa). A compositionally biased stretch (basic and acidic residues) spans 145–154; sequence LRRDGDEAES. The segment at 222–307 adopts a 3CxxC-type zinc-finger fold; sequence PKYGYFHCKD…QELCGRCKDK (86 aa).

The protein belongs to the ZAR1 family. In terms of assembly, interacts with YBX2.

The protein localises to the cytoplasm. It is found in the cytoplasmic ribonucleoprotein granule. In terms of biological role, mRNA-binding protein required for maternal mRNA storage, translation and degradation during oocyte maturation. Probably promotes formation of some phase-separated membraneless compartment that stores maternal mRNAs in oocytes: acts by undergoing liquid-liquid phase separation upon binding to maternal mRNAs. Binds to the 3'-UTR of maternal mRNAs, inhibiting their translation. The polypeptide is Protein ZAR1-like (Homo sapiens (Human)).